The chain runs to 245 residues: Eukaryotic translation initiation factor 6 (245 aa).

The protein belongs to the eIF-6 family. Monomer. Associates with the 60S ribosomal subunit.

It localises to the cytoplasm. It is found in the nucleus. The protein localises to the nucleolus. Binds to the 60S ribosomal subunit and prevents its association with the 40S ribosomal subunit to form the 80S initiation complex in the cytoplasm. May also be involved in ribosome biogenesis. The sequence is that of Eukaryotic translation initiation factor 6 from Ostreococcus lucimarinus (strain CCE9901).